A 111-amino-acid chain; its full sequence is Nucleoid-associated protein CYA_1369 (111 aa).

The protein belongs to the YbaB/EbfC family. In terms of assembly, homodimer.

It is found in the cytoplasm. The protein localises to the nucleoid. Functionally, binds to DNA and alters its conformation. May be involved in regulation of gene expression, nucleoid organization and DNA protection. This chain is Nucleoid-associated protein CYA_1369, found in Synechococcus sp. (strain JA-3-3Ab) (Cyanobacteria bacterium Yellowstone A-Prime).